Reading from the N-terminus, the 337-residue chain is D-alanine--D-alanine ligase (337 aa).

The region spanning lysine 126 to serine 326 is the ATP-grasp domain. Valine 152–threonine 207 contributes to the ATP binding site. Mg(2+) is bound by residues aspartate 279, glutamate 293, and asparagine 295.

The protein belongs to the D-alanine--D-alanine ligase family. The cofactor is Mg(2+). It depends on Mn(2+) as a cofactor.

Its subcellular location is the cytoplasm. It catalyses the reaction 2 D-alanine + ATP = D-alanyl-D-alanine + ADP + phosphate + H(+). Its pathway is cell wall biogenesis; peptidoglycan biosynthesis. In terms of biological role, cell wall formation. In Polynucleobacter asymbioticus (strain DSM 18221 / CIP 109841 / QLW-P1DMWA-1) (Polynucleobacter necessarius subsp. asymbioticus), this protein is D-alanine--D-alanine ligase.